The primary structure comprises 89 residues: Small ribosomal subunit protein uS15 (89 aa).

This sequence belongs to the universal ribosomal protein uS15 family. As to quaternary structure, part of the 30S ribosomal subunit. Forms a bridge to the 50S subunit in the 70S ribosome, contacting the 23S rRNA.

In terms of biological role, one of the primary rRNA binding proteins, it binds directly to 16S rRNA where it helps nucleate assembly of the platform of the 30S subunit by binding and bridging several RNA helices of the 16S rRNA. Its function is as follows. Forms an intersubunit bridge (bridge B4) with the 23S rRNA of the 50S subunit in the ribosome. The polypeptide is Small ribosomal subunit protein uS15 (Anoxybacillus flavithermus (strain DSM 21510 / WK1)).